The primary structure comprises 369 residues: Anhydro-N-acetylmuramic acid kinase (369 aa).

12–19 is an ATP binding site; it reads GTSLDGVD.

This sequence belongs to the anhydro-N-acetylmuramic acid kinase family.

It catalyses the reaction 1,6-anhydro-N-acetyl-beta-muramate + ATP + H2O = N-acetyl-D-muramate 6-phosphate + ADP + H(+). Its pathway is amino-sugar metabolism; 1,6-anhydro-N-acetylmuramate degradation. It participates in cell wall biogenesis; peptidoglycan recycling. Functionally, catalyzes the specific phosphorylation of 1,6-anhydro-N-acetylmuramic acid (anhMurNAc) with the simultaneous cleavage of the 1,6-anhydro ring, generating MurNAc-6-P. Is required for the utilization of anhMurNAc either imported from the medium or derived from its own cell wall murein, and thus plays a role in cell wall recycling. This Escherichia coli (strain K12 / MC4100 / BW2952) protein is Anhydro-N-acetylmuramic acid kinase.